Reading from the N-terminus, the 464-residue chain is Glutamyl-tRNA reductase (464 aa).

Residues 47 to 50 (TCNR), serine 145, 150 to 152 (EPQ), and glutamine 156 contribute to the substrate site. The active-site Nucleophile is the cysteine 48. 225–230 (AAGEMN) is a binding site for NADP(+).

Belongs to the glutamyl-tRNA reductase family. In terms of assembly, homodimer.

It carries out the reaction (S)-4-amino-5-oxopentanoate + tRNA(Glu) + NADP(+) = L-glutamyl-tRNA(Glu) + NADPH + H(+). The protein operates within porphyrin-containing compound metabolism; protoporphyrin-IX biosynthesis; 5-aminolevulinate from L-glutamyl-tRNA(Glu): step 1/2. Its function is as follows. Catalyzes the NADPH-dependent reduction of glutamyl-tRNA(Glu) to glutamate 1-semialdehyde (GSA). The polypeptide is Glutamyl-tRNA reductase (Psychrobacter cryohalolentis (strain ATCC BAA-1226 / DSM 17306 / VKM B-2378 / K5)).